The sequence spans 250 residues: MATFFISDLHLGTGKTEIQLRAIEFLSQEAPYGDALYILGDLFDYWIGDDAPTAEGLAIITALRRLADVGVTLHFLSGNRDFLVGQVFSQASGCQILSDPAIIDLYGVPTLLMHGDTLCTDDVAYQRARARLRRPAILRTYLALPKSWRRAVAQRLRRQSQAHVQHQPLTIMDVNQTAVETALRIHGVKQLIHGHTHRPAVHHFTVDGHPRQRIVLGDWDRGKSALSCTPEGFHFSDSRILEPRFGNLQG.

Residues aspartate 8, histidine 10, aspartate 41, asparagine 79, and histidine 114 each coordinate Mn(2+). Substrate is bound at residue asparagine 79–arginine 80. Aspartate 122, serine 160, glutamine 167, and histidine 195 together coordinate substrate. Mn(2+) contacts are provided by histidine 195 and histidine 197.

Belongs to the LpxH family. Mn(2+) is required as a cofactor.

It localises to the cell inner membrane. The catalysed reaction is UDP-2-N,3-O-bis[(3R)-3-hydroxytetradecanoyl]-alpha-D-glucosamine + H2O = 2-N,3-O-bis[(3R)-3-hydroxytetradecanoyl]-alpha-D-glucosaminyl 1-phosphate + UMP + 2 H(+). It functions in the pathway glycolipid biosynthesis; lipid IV(A) biosynthesis; lipid IV(A) from (3R)-3-hydroxytetradecanoyl-[acyl-carrier-protein] and UDP-N-acetyl-alpha-D-glucosamine: step 4/6. In terms of biological role, hydrolyzes the pyrophosphate bond of UDP-2,3-diacylglucosamine to yield 2,3-diacylglucosamine 1-phosphate (lipid X) and UMP by catalyzing the attack of water at the alpha-P atom. Involved in the biosynthesis of lipid A, a phosphorylated glycolipid that anchors the lipopolysaccharide to the outer membrane of the cell. The protein is UDP-2,3-diacylglucosamine hydrolase of Nitrosococcus oceani (strain ATCC 19707 / BCRC 17464 / JCM 30415 / NCIMB 11848 / C-107).